The chain runs to 109 residues: MGGASKKPISTVEKRMKKMAEEQQKKQQKRATTKTGKELTSKNVVIDNETLKKVQEELKKETIVTPYTLSTKLNVTISVAKKILEELERQGVVKIGTKDRRTAVYIAAS.

Residues 1–36 form a disordered region; the sequence is MGGASKKPISTVEKRMKKMAEEQQKKQQKRATTKTG. Over residues 12–25 the composition is skewed to basic and acidic residues; it reads VEKRMKKMAEEQQK.

This sequence belongs to the eukaryotic ribosomal protein eS25 family.

The polypeptide is Small ribosomal subunit protein eS25 (rps25e) (Sulfurisphaera tokodaii (strain DSM 16993 / JCM 10545 / NBRC 100140 / 7) (Sulfolobus tokodaii)).